The chain runs to 349 residues: Nicotinate-nucleotide--dimethylbenzimidazole phosphoribosyltransferase (349 aa).

Glutamate 315 acts as the Proton acceptor in catalysis.

Belongs to the CobT family.

The catalysed reaction is 5,6-dimethylbenzimidazole + nicotinate beta-D-ribonucleotide = alpha-ribazole 5'-phosphate + nicotinate + H(+). It functions in the pathway nucleoside biosynthesis; alpha-ribazole biosynthesis; alpha-ribazole from 5,6-dimethylbenzimidazole: step 1/2. Catalyzes the synthesis of alpha-ribazole-5'-phosphate from nicotinate mononucleotide (NAMN) and 5,6-dimethylbenzimidazole (DMB). This is Nicotinate-nucleotide--dimethylbenzimidazole phosphoribosyltransferase from Variovorax paradoxus (strain S110).